The following is a 322-amino-acid chain: Serine protease Lpg1137 (322 aa).

Serine 68 is an active-site residue.

The protein localises to the secreted. The protein resides in the host mitochondrion membrane. In terms of biological role, serine protease effector that inhibits host cell autophagy by targeting SNX17. Localizes to the host endoplasmic reticulum-mitochondria contact site and catalyzes degradation of host SNX17, thereby impairing endoplasmic reticulum-mitochondria communication, leading to inhibit autophagy as well as staurosporine-induced apoptosis. This Legionella pneumophila subsp. pneumophila (strain Philadelphia 1 / ATCC 33152 / DSM 7513) protein is Serine protease Lpg1137.